A 396-amino-acid chain; its full sequence is MATIFFAEPELVIGHGRKVLFLNPGDLQIFKEIELPPDLTTCGLKTVEPVPAPGHPASSSKQQPAALKEATGSVKVEVSIQNVTYSPDRQLLALTTAGQKAVLLYKSRPENAQLLSIRPLARASSALRFCSDGSSVLVTDKTGDCYQYDCVEVDASPRLLLGHLSIVYDVLWSEDQQYIITCDRDDKIRVTNYPATFDIHSYCLGHKEFVSGLAMLTEQHIISASGDKTLRVWNYTCGKELLLHELPAPAVRMLVRQLEPEKTYEVAVLFYDYVDAIGVYRLEQTTTESWSITSTQLVRAEAGTWNICNFALTDDRIYVTGAENERLTLRVYDSRNGERASGLPEGWLKMVLDNLDVAAFMPEDLSVWFKKRFDNVSEYLERKKRRIEEQKQQKCG.

WD repeat units follow at residues 75–115, 162–201, 205–243, and 302–342; these read KVEV…AQLL, GHLS…DIHS, GHKE…ELLL, and AGTW…RASG.

It belongs to the WD repeat TRM82 family. Forms a heterodimer with the catalytic subunit Mettl1. Interacts with mei-P26 and weakly interacts with bgcn; required for the function or formation of the mei-P26-bgcn-bam-sxl complex. Interacts with nanos; may be involved in mei-P26-dependent derepression of the BMP signaling pathway. Interacts with Myc; the interaction may be mediated by mei-P26 and may be involved in the regulation of ribosome biogenesis. In testis, it is present at high level in hub cells, a niche for germline stem cells of testis. Ubiquitously expressed in all testicular cells throughout spermatogenesis. Ubiquitously expressed in all germline and somatic cells of the ovary.

It is found in the nucleus. It localises to the cytoplasm. The protein operates within tRNA modification; N(7)-methylguanine-tRNA biosynthesis. Required for the Mettl1-dependent formation of N(7)-methylguanine at position 46 (m7G46) in tRNA. In the Mettl1-wuho methyltransferase complex, it is required to stabilize and induce conformational changes of the catalytic subunit. Required for binding of nanos mRNA and repression of translation by the mei-P26-bgcn-bam-sxl complex. May cooperate with mei-P26 and nanos to derepress the BMP signaling pathway. May cooperate with mei-P26 to suppress expression of a subset of microRNAs. May cooperate with mei-P26 to regulate bam expression levels in germline cells during gametogenesis. Required to promote mitosis to meiosis transition during gametogenesis. May regulate germline cell division in part by regulating ribosome biogenesis. This is tRNA (guanine-N(7)-)-methyltransferase non-catalytic subunit wuho from Drosophila pseudoobscura pseudoobscura (Fruit fly).